A 372-amino-acid chain; its full sequence is Fatty acid 2-hydroxylase (372 aa).

Residues 8–86 (AASFTPAEVQ…LEQYYVGELR (79 aa)) enclose the Cytochrome b5 heme-binding domain. Histidine 43 and histidine 69 together coordinate heme. 2 helical membrane-spanning segments follow: residues 168–188 (VWYSVPIIWVPLVLYLSWSYY) and 213–233 (SVFIGLFVLGMLFWTFVEYVI). The Fatty acid hydroxylase domain maps to 219–361 (FVLGMLFWTF…TKLWDYFFHT (143 aa)). Histidine 234, histidine 239, histidine 257, histidine 260, and histidine 261 together coordinate Zn(2+). Transmembrane regions (helical) follow at residues 268–288 (SRLVFPPVPASLVIAFFYVFL) and 290–310 (LILPETVGGIIFAGGLLGYVL). The Zn(2+) site is built by histidine 315, histidine 319, histidine 336, histidine 339, and histidine 340.

It belongs to the sterol desaturase family. SCS7 subfamily. Zn(2+) is required as a cofactor. Expressed in brain (at protein level). Detected in cerebellum and forebrain. Expression in the white matter is mainly restricted in oligodendrocytes. Expressed in stomach, kidney, skin and testis. Expressed in sebaceous gland.

The protein localises to the endoplasmic reticulum membrane. It localises to the microsome membrane. It carries out the reaction a 1,2-saturated fatty acid + 2 Fe(II)-[cytochrome b5] + O2 + 2 H(+) = a (R)-2-hydroxy fatty acid + 2 Fe(III)-[cytochrome b5] + H2O. It catalyses the reaction hexadecanoate + 2 Fe(II)-[cytochrome b5] + O2 + 2 H(+) = (R)-2-hydroxyhexadecanoate + 2 Fe(III)-[cytochrome b5] + H2O. The enzyme catalyses octadecanoate + 2 Fe(II)-[cytochrome b5] + O2 + 2 H(+) = (R)-2-hydroxyoctadecanoate + 2 Fe(III)-[cytochrome b5] + H2O. The catalysed reaction is docosanoate + 2 Fe(II)-[cytochrome b5] + O2 + 2 H(+) = 2-hydroxydocosanoate + 2 Fe(III)-[cytochrome b5] + H2O. It carries out the reaction tetracosanoate + 2 Fe(II)-[cytochrome b5] + O2 + 2 H(+) = (R)-2-hydroxytetracosanoate + 2 Fe(III)-[cytochrome b5] + H2O. The protein operates within sphingolipid metabolism; galactosylceramide biosynthesis. It participates in lipid metabolism; fatty acid metabolism. Functionally, catalyzes the hydroxylation of free fatty acids at the C-2 position to produce 2-hydroxy fatty acids, which are building blocks of sphingolipids and glycosphingolipids common in neural tissue and epidermis. FA2H is stereospecific for the production of (R)-2-hydroxy fatty acids. Plays an essential role in the synthesis of galactosphingolipids of the myelin sheath. Responsible for the synthesis of sphingolipids and glycosphingolipids involved in the formation of epidermal lamellar bodies critical for skin permeability barrier. Participates in the synthesis of glycosphingolipids and a fraction of type II wax diesters in sebaceous gland, specifically regulating hair follicle homeostasis. Involved in the synthesis of sphingolipids of plasma membrane rafts, controlling lipid raft mobility and trafficking of raft-associated proteins. This Mus musculus (Mouse) protein is Fatty acid 2-hydroxylase.